Consider the following 309-residue polypeptide: Tagatose-6-phosphate kinase (309 aa).

The protein belongs to the carbohydrate kinase PfkB family. LacC subfamily.

The catalysed reaction is D-tagatofuranose 6-phosphate + ATP = D-tagatofuranose 1,6-bisphosphate + ADP + H(+). The protein operates within carbohydrate metabolism; D-tagatose 6-phosphate degradation; D-glyceraldehyde 3-phosphate and glycerone phosphate from D-tagatose 6-phosphate: step 1/2. This is Tagatose-6-phosphate kinase from Streptococcus pneumoniae serotype 4 (strain ATCC BAA-334 / TIGR4).